The sequence spans 764 residues: 5-methyltetrahydropteroyltriglutamate--homocysteine methyltransferase (764 aa).

5-methyltetrahydropteroyltri-L-glutamate-binding positions include R19 to K22 and K113. Residues I435–S437 and E488 contribute to the L-homocysteine site. L-methionine is bound by residues I435–S437 and E488. 5-methyltetrahydropteroyltri-L-glutamate contacts are provided by residues R519 to C520 and W565. D603 lines the L-homocysteine pocket. Residue D603 coordinates L-methionine. E609 lines the 5-methyltetrahydropteroyltri-L-glutamate pocket. 3 residues coordinate Zn(2+): H645, C647, and E669. The active-site Proton donor is the H698. C730 lines the Zn(2+) pocket.

It belongs to the vitamin-B12 independent methionine synthase family. Requires Zn(2+) as cofactor.

It catalyses the reaction 5-methyltetrahydropteroyltri-L-glutamate + L-homocysteine = tetrahydropteroyltri-L-glutamate + L-methionine. It functions in the pathway amino-acid biosynthesis; L-methionine biosynthesis via de novo pathway; L-methionine from L-homocysteine (MetE route): step 1/1. Functionally, catalyzes the transfer of a methyl group from 5-methyltetrahydrofolate to homocysteine resulting in methionine formation. The polypeptide is 5-methyltetrahydropteroyltriglutamate--homocysteine methyltransferase (Desulforamulus reducens (strain ATCC BAA-1160 / DSM 100696 / MI-1) (Desulfotomaculum reducens)).